Reading from the N-terminus, the 136-residue chain is Type II nicking enzyme V.XorIIP (136 aa).

This sequence belongs to the Vsr family.

In terms of biological role, may nick XorII sequences that contain T/G mispairs resulting from m5C-deamination. If unrepaired, these mismatches can lead to C-to-T transition mutations. The very short patch (VSP) repair process counteracts the mutagenic process by repairing the mismatches in favor of the G-containing strand. This enzyme is an endonuclease that nicks double-stranded DNA within the sequence CGATCG (C-methylation site unknown) next to the thymidine residue that is mismatched to 2'-deoxyguanosine. The incision is mismatch-dependent and strand-specific. This chain is Type II nicking enzyme V.XorIIP, found in Xanthomonas oryzae pv. oryzae (strain KACC10331 / KXO85).